The primary structure comprises 195 residues: Small ribosomal subunit protein uS4B (195 aa).

One can recognise an S4 RNA-binding domain in the interval 107-181 (RRLQTQVYKL…VARRNAARKA (75 aa)). Positions 161 to 195 (TSPFGGARPGRVARRNAARKAEASGEAAEEAEDEE) are disordered. Residue Lys-180 forms a Glycyl lysine isopeptide (Lys-Gly) (interchain with G-Cter in ubiquitin) linkage. At Ser-184 the chain carries Phosphoserine.

This sequence belongs to the universal ribosomal protein uS4 family. As to quaternary structure, component of the small ribosomal subunit (SSU). Mature yeast ribosomes consist of a small (40S) and a large (60S) subunit. The 40S small subunit contains 1 molecule of ribosomal RNA (18S rRNA) and 33 different proteins (encoded by 57 genes). The large 60S subunit contains 3 rRNA molecules (25S, 5.8S and 5S rRNA) and 46 different proteins (encoded by 81 genes). Interacts with snoRNA U3. uS11 interacts with MPP10. Component of the ribosomal small subunit (SSU) processome composed of at least 40 protein subunits and snoRNA U3.

It localises to the cytoplasm. The protein resides in the nucleus. The protein localises to the nucleolus. Its function is as follows. Component of the ribosome, a large ribonucleoprotein complex responsible for the synthesis of proteins in the cell. The small ribosomal subunit (SSU) binds messenger RNAs (mRNAs) and translates the encoded message by selecting cognate aminoacyl-transfer RNA (tRNA) molecules. The large subunit (LSU) contains the ribosomal catalytic site termed the peptidyl transferase center (PTC), which catalyzes the formation of peptide bonds, thereby polymerizing the amino acids delivered by tRNAs into a polypeptide chain. The nascent polypeptides leave the ribosome through a tunnel in the LSU and interact with protein factors that function in enzymatic processing, targeting, and the membrane insertion of nascent chains at the exit of the ribosomal tunnel. uS4 is involved in nucleolar processing of pre-18S ribosomal RNA and ribosome assembly. In Saccharomyces cerevisiae (strain ATCC 204508 / S288c) (Baker's yeast), this protein is Small ribosomal subunit protein uS4B.